A 190-amino-acid chain; its full sequence is Ion-translocating oxidoreductase complex subunit B (190 aa).

Residues 1–26 (MTALWIAIAALSALGLLFGLVLGYAA) form a hydrophobic region. The 4Fe-4S domain maps to 32-90 (EEDPVAEQVDEILPQSQCGQCGYPGCRPYAEAVANGEMINKCAPGGEQVMLKLAELLNV). [4Fe-4S] cluster contacts are provided by C49, C52, C57, C73, C115, C118, C121, C125, C145, C148, C151, and C155. 4Fe-4S ferredoxin-type domains follow at residues 106–135 (QVAY…GATR) and 136–165 (AMHT…MRPV).

This sequence belongs to the 4Fe4S bacterial-type ferredoxin family. RnfB subfamily. As to quaternary structure, the complex is composed of six subunits: RnfA, RnfB, RnfC, RnfD, RnfE and RnfG. It depends on [4Fe-4S] cluster as a cofactor.

The protein resides in the cell inner membrane. Functionally, part of a membrane-bound complex that couples electron transfer with translocation of ions across the membrane. The chain is Ion-translocating oxidoreductase complex subunit B from Serratia proteamaculans (strain 568).